We begin with the raw amino-acid sequence, 226 residues long: UPF0502 protein Daci_5373 (226 aa).

The protein belongs to the UPF0502 family.

The sequence is that of UPF0502 protein Daci_5373 from Delftia acidovorans (strain DSM 14801 / SPH-1).